Here is a 459-residue protein sequence, read N- to C-terminus: Glycosyl hydrolase family 109 protein 1 (459 aa).

Positions 1 to 31 (MHNIHRRHFLKAAGAVTAGLVTANIALNANA) form a signal peptide, tat-type signal. Residues 64-65 (ER), Asp-86, 135-138 (WEWH), 155-156 (EV), and Asn-184 contribute to the NAD(+) site. Substrate is bound by residues Tyr-213, Arg-232, 244–247 (YPTH), and Tyr-326. Residue Tyr-244 participates in NAD(+) binding.

This sequence belongs to the Gfo/Idh/MocA family. Glycosyl hydrolase 109 subfamily. Requires NAD(+) as cofactor. Post-translationally, predicted to be exported by the Tat system. The position of the signal peptide cleavage has not been experimentally proven.

Glycosidase. This chain is Glycosyl hydrolase family 109 protein 1, found in Shewanella sp. (strain MR-7).